An 809-amino-acid chain; its full sequence is DNA replication helicase (809 aa).

ATP is bound at residue 72 to 79 (GTAGAGKS).

This sequence belongs to the herpesviridae helicase family. As to quaternary structure, associates with the primase and the primase-associated factor to form the helicase-primase complex.

The protein resides in the host nucleus. Its function is as follows. Component of the helicase/primase complex. Unwinds the DNA at the replication forks and generates single-stranded DNA for both leading and lagging strand synthesis. The primase synthesizes short RNA primers on the lagging strand that the polymerase elongates using dNTPs. Possesses helicase-like motifs and therefore may act as the helicase subunit of the complex. The protein is DNA replication helicase of Epstein-Barr virus (strain B95-8) (HHV-4).